An 80-amino-acid chain; its full sequence is Trefoil factor 3 (80 aa).

Residues 1–21 form the signal peptide; it reads MAARALCMLGLVLALLSSSSA. A P-type domain is found at 30-73; it reads NQCAVPAKDRVDCGYPHVTPKECNNRGCCFDSRIPGVPWCFKPL. 3 disulfide bridges follow: Cys-32–Cys-58, Cys-42–Cys-57, and Cys-52–Cys-69.

As to quaternary structure, monomer. Homodimer; disulfide-linked. As to expression, expressed in goblet cells of the intestines and colon (at protein level). Expressed by goblet cells of small and large intestinal epithelia and also by the uterus. Also expressed in the hypothalamus where it is detected in paraventricular, periventricular and supraoptic nuclei (at protein level).

Its subcellular location is the secreted. The protein localises to the extracellular space. It localises to the extracellular matrix. The protein resides in the cytoplasm. Its function is as follows. Involved in the maintenance and repair of the intestinal mucosa. Promotes the mobility of epithelial cells in healing processes (motogen). The polypeptide is Trefoil factor 3 (TFF3) (Homo sapiens (Human)).